Here is a 431-residue protein sequence, read N- to C-terminus: MLDPKYLRSDIAEAAARLATRGYVLDVAAVNALEEKRKDLQSRTQELQAERNARSKSIGEAARRGEDVAPLKAEVTKINEELETSKVELDALLAELKVIADAIPNLPSDTTPVGRDENDNVEVRRWGTPREFSFPVRDHIDLGEAAKGVDFKNGVKLSGSRFVVMKGQIARLHRALAQFMLDLHTLQHGYTECYVPYLVNPDSLYGTGQLPKFSQDLFNTGIDGEGEEEGKVRKFSLIPTSEVPLTNMARDEIFDEQELPIKMTAHSPCFRSEAGSYGRDTRGLIRMHQFDKVEMVQLVHPEKSWEALEEMAGHAEKVLQLLELPYRVMALSTGDMGFCAAKTYDLEVWLPAQNTYREISSVSNCTDFQARRMQARVRIDGKPQLLHTLNGSGLAVGRTLVAVIENYQQEDGRIAIPAALQSYMGGLTHIG.

A disordered region spans residues 41–66 (QSRTQELQAERNARSKSIGEAARRGE). L-serine is bound at residue 240–242 (TSE). 271-273 (RSE) is a binding site for ATP. Glu294 contacts L-serine. 358–361 (EISS) provides a ligand contact to ATP. Ser392 is an L-serine binding site.

It belongs to the class-II aminoacyl-tRNA synthetase family. Type-1 seryl-tRNA synthetase subfamily. In terms of assembly, homodimer. The tRNA molecule binds across the dimer.

The protein resides in the cytoplasm. The catalysed reaction is tRNA(Ser) + L-serine + ATP = L-seryl-tRNA(Ser) + AMP + diphosphate + H(+). It carries out the reaction tRNA(Sec) + L-serine + ATP = L-seryl-tRNA(Sec) + AMP + diphosphate + H(+). It functions in the pathway aminoacyl-tRNA biosynthesis; selenocysteinyl-tRNA(Sec) biosynthesis; L-seryl-tRNA(Sec) from L-serine and tRNA(Sec): step 1/1. Its function is as follows. Catalyzes the attachment of serine to tRNA(Ser). Is also able to aminoacylate tRNA(Sec) with serine, to form the misacylated tRNA L-seryl-tRNA(Sec), which will be further converted into selenocysteinyl-tRNA(Sec). This chain is Serine--tRNA ligase, found in Aeromonas hydrophila subsp. hydrophila (strain ATCC 7966 / DSM 30187 / BCRC 13018 / CCUG 14551 / JCM 1027 / KCTC 2358 / NCIMB 9240 / NCTC 8049).